The primary structure comprises 270 residues: Phosphonates import ATP-binding protein PhnC 1 (270 aa).

The ABC transporter domain occupies 2–245 (LVVEGLTCRF…IARELYDLEA (244 aa)). ATP is bound at residue 34–41 (GRSGAGKS).

It belongs to the ABC transporter superfamily. Phosphonates importer (TC 3.A.1.9.1) family. The complex is composed of two ATP-binding proteins (PhnC), two transmembrane proteins (PhnE) and a solute-binding protein (PhnD).

It is found in the cell inner membrane. It carries out the reaction phosphonate(out) + ATP + H2O = phosphonate(in) + ADP + phosphate + H(+). In terms of biological role, part of the ABC transporter complex PhnCDE involved in phosphonates import. Responsible for energy coupling to the transport system. In Rhodopseudomonas palustris (strain ATCC BAA-98 / CGA009), this protein is Phosphonates import ATP-binding protein PhnC 1.